The sequence spans 383 residues: NAD(P) transhydrogenase subunit alpha part 1 (383 aa).

Residues 131 to 134 (QNMD), valine 181, 201 to 203 (DVR), and glycine 231 contribute to the NAD(+) site.

It belongs to the AlaDH/PNT family. Heterotrimer of two alpha chains and a beta (PntB) chain; in Rickettsia, the alpha chain is made of two subunits (PntAA and PntAB) and forms a dimer.

It carries out the reaction NAD(+) + NADPH + H(+)(in) = NADH + NADP(+) + H(+)(out). In terms of biological role, the transhydrogenation between NADH and NADP is coupled to respiration and ATP hydrolysis and functions as a proton pump across the membrane. The protein is NAD(P) transhydrogenase subunit alpha part 1 (pntAA) of Rickettsia prowazekii (strain Madrid E).